The primary structure comprises 263 residues: Small ribosomal subunit protein eS4 (263 aa).

The S4 RNA-binding domain maps to L42–D104.

It belongs to the eukaryotic ribosomal protein eS4 family.

In Pongo pygmaeus (Bornean orangutan), this protein is Small ribosomal subunit protein eS4 (RPS4Y1).